The following is a 570-amino-acid chain: Urease subunit alpha (570 aa).

Residues 131–570 (GGIDSHIHFI…LPMTQRYFLF (440 aa)) enclose the Urease domain. Ni(2+) contacts are provided by H136, H138, and K219. K219 bears the N6-carboxylysine mark. H221 is a substrate binding site. Ni(2+)-binding residues include H248 and H274. H322 acts as the Proton donor in catalysis. D362 contributes to the Ni(2+) binding site.

This sequence belongs to the metallo-dependent hydrolases superfamily. Urease alpha subunit family. As to quaternary structure, heterotrimer of UreA (gamma), UreB (beta) and UreC (alpha) subunits. Three heterotrimers associate to form the active enzyme. Ni cation is required as a cofactor. Carboxylation allows a single lysine to coordinate two nickel ions.

Its subcellular location is the cytoplasm. The catalysed reaction is urea + 2 H2O + H(+) = hydrogencarbonate + 2 NH4(+). Its pathway is nitrogen metabolism; urea degradation; CO(2) and NH(3) from urea (urease route): step 1/1. The chain is Urease subunit alpha from Trichodesmium erythraeum (strain IMS101).